The chain runs to 295 residues: Small ribosomal subunit protein uS2 (295 aa).

This sequence belongs to the universal ribosomal protein uS2 family.

The polypeptide is Small ribosomal subunit protein uS2 (Rickettsia canadensis (strain McKiel)).